Here is a 959-residue protein sequence, read N- to C-terminus: Isoleucine--tRNA ligase (959 aa).

Positions 60–70 match the 'HIGH' region motif; the sequence is PYANGSLHMGH. Glu-569 provides a ligand contact to L-isoleucyl-5'-AMP. The 'KMSKS' region motif lies at 610-614; it reads KMSKS. Lys-613 is a binding site for ATP. Zn(2+) is bound by residues Cys-928, Cys-931, Cys-948, and Cys-951.

The protein belongs to the class-I aminoacyl-tRNA synthetase family. IleS type 1 subfamily. In terms of assembly, monomer. Zn(2+) serves as cofactor.

Its subcellular location is the cytoplasm. The catalysed reaction is tRNA(Ile) + L-isoleucine + ATP = L-isoleucyl-tRNA(Ile) + AMP + diphosphate. Its function is as follows. Catalyzes the attachment of isoleucine to tRNA(Ile). As IleRS can inadvertently accommodate and process structurally similar amino acids such as valine, to avoid such errors it has two additional distinct tRNA(Ile)-dependent editing activities. One activity is designated as 'pretransfer' editing and involves the hydrolysis of activated Val-AMP. The other activity is designated 'posttransfer' editing and involves deacylation of mischarged Val-tRNA(Ile). The sequence is that of Isoleucine--tRNA ligase from Rippkaea orientalis (strain PCC 8801 / RF-1) (Cyanothece sp. (strain PCC 8801)).